Here is a 690-residue protein sequence, read N- to C-terminus: MATENFLIELGTEELPPKALRKLAQAFADNFTAELDKAGLAHQGVQWFAAPRRLALKVAALADKQADKQVEKRGPAVSAAFDAAGNPTPAAAGWAKSNGIEVAQADRLATDKGEWLVYRANVAGQPTTGLLPAMAATALAGLPIPKPMRWGAKRTQFIRPVHTLCMLFGAELVDGEILGLRSARIIRGHRFMGEAQFEISHADQYPALLLEKGKVQADYETRKAFIKAGAEAAAQQLGGIADIEESLLEEVTSLVEWPVILTATFEEKFLAVPAEALVHTMKGDQKYFPVYDNNGKLLPNFIFVSNIESKDPAQIIQGNERVVRPRLSDAEFFFNTDKKHSLASRLESLDTVLFQQQLGTLKDKSVRIAEMSAFIAAQIGADVEHATRAGLLSKCDLMTNMVMEFTDTQGVMGMHYARHDHEAEDVAVALNEQYMPRFAGDNLPNGLVACAVAIADKLDTLAGIFGIGQAPKGDKDPFALRRAAIGTLRIIVEKQLDLDLVDVVSKAAELYDGKISNKSVVDEVVDFMLGRFRASYQEAGIAVDVIQAVLARRPTRPADFDARVKAVSHFRTLDAAEALAAANKRVSNILAKFDGKLKDSVDAALLQDPAEQVLAQQVAAMETKLAPLFANGEYQLALTELAALREAVDTFFDKVMVMADDEALKLNRLTLLARLQALFLQAADISLLQQ.

The protein belongs to the class-II aminoacyl-tRNA synthetase family. As to quaternary structure, tetramer of two alpha and two beta subunits.

Its subcellular location is the cytoplasm. The catalysed reaction is tRNA(Gly) + glycine + ATP = glycyl-tRNA(Gly) + AMP + diphosphate. The polypeptide is Glycine--tRNA ligase beta subunit (Tolumonas auensis (strain DSM 9187 / NBRC 110442 / TA 4)).